A 370-amino-acid polypeptide reads, in one-letter code: Biotin synthase (370 aa).

Positions 56–283 (NAVQVSTLLS…KSHVRLSAGR (228 aa)) constitute a Radical SAM core domain. The [4Fe-4S] cluster site is built by Cys71, Cys75, and Cys78. Residues Cys115, Cys146, Cys206, and Arg278 each contribute to the [2Fe-2S] cluster site. Residues 327-344 (GLHPEPSDPHADDAHRDD) are compositionally biased toward basic and acidic residues. Positions 327–346 (GLHPEPSDPHADDAHRDDEQ) are disordered.

Belongs to the radical SAM superfamily. Biotin synthase family. In terms of assembly, homodimer. Requires [4Fe-4S] cluster as cofactor. The cofactor is [2Fe-2S] cluster.

The catalysed reaction is (4R,5S)-dethiobiotin + (sulfur carrier)-SH + 2 reduced [2Fe-2S]-[ferredoxin] + 2 S-adenosyl-L-methionine = (sulfur carrier)-H + biotin + 2 5'-deoxyadenosine + 2 L-methionine + 2 oxidized [2Fe-2S]-[ferredoxin]. Its pathway is cofactor biosynthesis; biotin biosynthesis; biotin from 7,8-diaminononanoate: step 2/2. Functionally, catalyzes the conversion of dethiobiotin (DTB) to biotin by the insertion of a sulfur atom into dethiobiotin via a radical-based mechanism. The chain is Biotin synthase from Chromohalobacter salexigens (strain ATCC BAA-138 / DSM 3043 / CIP 106854 / NCIMB 13768 / 1H11).